Here is a 336-residue protein sequence, read N- to C-terminus: Polyadenylate-binding protein-interacting protein 12 (336 aa).

The tract at residues 14-47 is disordered; the sequence is EAGGLISPSPPSSVTSQESGASSNNDHGGNGIHD. Polar residues predominate over residues 25 to 40; that stretch reads SSVTSQESGASSNNDH. The short motif at 75–85 is the PAM2-like element; that stretch reads KLNPMAKEFIP. Positions 122–134 match the Bipartite nuclear localization signal motif; the sequence is RRKKSFGQQGKRR. RRM domains lie at 150-225 and 247-323; these read RTVY…PSKT and RTIY…PSKT.

As to quaternary structure, interacts with MPC. Expressed in roots, leaves, stems, flowers and siliques. Detected in flowers only in growing organs: gynoecium, petals, stamenal filaments, anther walls and ovules.

It is found in the nucleus. Binds nucleotic acids in vitro. The sequence is that of Polyadenylate-binding protein-interacting protein 12 (CID12) from Arabidopsis thaliana (Mouse-ear cress).